The primary structure comprises 321 residues: Endochitinase 1 (321 aa).

Positions 1 to 21 (MSFRALSVFSLFLSYLILGSA) are cleaved as a signal peptide. Residues 22 to 64 (EQCGRQAGGALCPGGLCCSQFGWCGNTDDYCKKENGCQSQCSG) form the Chitin-binding type-1 domain. 7 disulfides stabilise this stretch: Cys24-Cys39, Cys33-Cys45, Cys38-Cys52, Cys58-Cys62, Cys93-Cys156, Cys167-Cys175, and Cys274-Cys306. Residues 65–98 (SGGDTGGLDSLITRERFDQMLLHRNDGGCPARGF) form a hinge region. A catalytic region spans residues 99-321 (YTYDAFIAAA…YNNGPSVDSM (223 aa)). Catalysis depends on Glu137, which acts as the Proton donor.

Belongs to the glycosyl hydrolase 19 family. Chitinase class I subfamily.

It is found in the vacuole. The catalysed reaction is Random endo-hydrolysis of N-acetyl-beta-D-glucosaminide (1-&gt;4)-beta-linkages in chitin and chitodextrins.. Functionally, defense against chitin-containing fungal pathogens. The sequence is that of Endochitinase 1 (CHIA1) from Theobroma cacao (Cacao).